We begin with the raw amino-acid sequence, 370 residues long: Ubiquitin carboxyl-terminal hydrolase 12-B (370 aa).

The region spanning 39–369 (FGLVNFGNTC…SGYILFYQSR (331 aa)) is the USP domain. Catalysis depends on Cys-48, which acts as the Nucleophile. Residues 145–168 (KQEKQNGRIPNGNIDNENNNNTPD) form a disordered region. Over residues 155-165 (NGNIDNENNNN) the composition is skewed to low complexity. Residues Cys-186, Cys-189, Cys-233, and Cys-236 each coordinate Zn(2+). The Proton acceptor role is filled by His-317.

It belongs to the peptidase C19 family. USP12/USP46 subfamily. As to quaternary structure, interacts with WDR48.

It catalyses the reaction Thiol-dependent hydrolysis of ester, thioester, amide, peptide and isopeptide bonds formed by the C-terminal Gly of ubiquitin (a 76-residue protein attached to proteins as an intracellular targeting signal).. In terms of biological role, deubiquitinating enzyme. Has almost no deubiquitinating activity by itself and requires the interaction with wdr48 to have a high activity. This chain is Ubiquitin carboxyl-terminal hydrolase 12-B (usp12-b), found in Xenopus laevis (African clawed frog).